Here is a 179-residue protein sequence, read N- to C-terminus: Phosphopantetheine adenylyltransferase (179 aa).

S23 is a substrate binding site. Residues 23–24 (SF) and H31 each bind ATP. Substrate contacts are provided by K55, A87, and R101. Residues 102–104 (GIR), E112, and 137–143 (FAHVSSS) each bind ATP.

This sequence belongs to the bacterial CoaD family. Homohexamer. Mg(2+) is required as a cofactor.

Its subcellular location is the cytoplasm. The catalysed reaction is (R)-4'-phosphopantetheine + ATP + H(+) = 3'-dephospho-CoA + diphosphate. Its pathway is cofactor biosynthesis; coenzyme A biosynthesis; CoA from (R)-pantothenate: step 4/5. Its function is as follows. Reversibly transfers an adenylyl group from ATP to 4'-phosphopantetheine, yielding dephospho-CoA (dPCoA) and pyrophosphate. This Rhodopirellula baltica (strain DSM 10527 / NCIMB 13988 / SH1) protein is Phosphopantetheine adenylyltransferase.